The following is a 394-amino-acid chain: Phloroisovalerophenone synthase (394 aa).

Residue C166 is part of the active site.

Belongs to the thiolase-like superfamily. Chalcone/stilbene synthases family. Homodimer. Expressed in lupulin gland. Present at low levels in leaves but accumulates in cones.

It carries out the reaction 3-methylbutanoyl-CoA + 3 malonyl-CoA + 3 H(+) = phlorisovalerophenone + 3 CO2 + 4 CoA. The enzyme catalyses (E)-4-coumaroyl-CoA + 3 malonyl-CoA + 3 H(+) = 2',4,4',6'-tetrahydroxychalcone + 3 CO2 + 4 CoA. It catalyses the reaction 2-methylpropanoyl-CoA + 3 malonyl-CoA + 3 H(+) = phlorisobutanophenone + 3 CO2 + 4 CoA. It participates in secondary metabolite biosynthesis. Its function is as follows. Involved in the biosynthesis of prenylated phenolics natural products which contribute to the bitter taste of beer and display broad biological activities. Polyketide synthase that can use 3-methylbutanoyl-CoA (isovaleryl-CoA) and 2-methylpropanoyl-CoA (isobutyryl-CoA) as substrates to produce phlorisovalerophenone (PIVP) and phlorisobutyrophenone (2-methyl-1-(2,4,6-trihydroxyphenyl)propan-1-one), respectively, intermediates in the biosynthesis of the bitter acids (alpha and beta) acids. Can also produce naringenin-chalcone (2',4,4',6'-tetrahydroxychalcone) from 4-coumaroyl-CoA with a lower efficiency. This chain is Phloroisovalerophenone synthase, found in Humulus lupulus (European hop).